The sequence spans 412 residues: Tryptophan synthase beta chain (412 aa).

Lys92 bears the N6-(pyridoxal phosphate)lysine mark.

The protein belongs to the TrpB family. As to quaternary structure, tetramer of two alpha and two beta chains. Requires pyridoxal 5'-phosphate as cofactor.

It carries out the reaction (1S,2R)-1-C-(indol-3-yl)glycerol 3-phosphate + L-serine = D-glyceraldehyde 3-phosphate + L-tryptophan + H2O. Its pathway is amino-acid biosynthesis; L-tryptophan biosynthesis; L-tryptophan from chorismate: step 5/5. The beta subunit is responsible for the synthesis of L-tryptophan from indole and L-serine. In Methylibium petroleiphilum (strain ATCC BAA-1232 / LMG 22953 / PM1), this protein is Tryptophan synthase beta chain.